Reading from the N-terminus, the 440-residue chain is Chromosomal replication initiator protein DnaA (440 aa).

The domain I, interacts with DnaA modulators stretch occupies residues 1–93 (MNVQLNEIWN…QTPVKPVAQE (93 aa)). The tract at residues 94-101 (YTEDSNMS) is domain II. Residues 102–318 (FLNPKYTFDT…GALNRVIAYS (217 aa)) form a domain III, AAA+ region region. ATP contacts are provided by Gly146, Gly148, Lys149, and Thr150. Residues 319-440 (TLTENIINVD…EEIKKNITGG (122 aa)) form a domain IV, binds dsDNA region.

It belongs to the DnaA family. Oligomerizes as a right-handed, spiral filament on DNA at oriC.

It is found in the cytoplasm. Functionally, plays an essential role in the initiation and regulation of chromosomal replication. ATP-DnaA binds to the origin of replication (oriC) to initiate formation of the DNA replication initiation complex once per cell cycle. Binds the DnaA box (a 9 base pair repeat at the origin) and separates the double-stranded (ds)DNA. Forms a right-handed helical filament on oriC DNA; dsDNA binds to the exterior of the filament while single-stranded (ss)DNA is stabiized in the filament's interior. The ATP-DnaA-oriC complex binds and stabilizes one strand of the AT-rich DNA unwinding element (DUE), permitting loading of DNA polymerase. After initiation quickly degrades to an ADP-DnaA complex that is not apt for DNA replication. Binds acidic phospholipids. The protein is Chromosomal replication initiator protein DnaA of Ruminiclostridium cellulolyticum (strain ATCC 35319 / DSM 5812 / JCM 6584 / H10) (Clostridium cellulolyticum).